The primary structure comprises 785 residues: MTSVNLSRAPAAITRRRLQLQPEFHAECSWLKSSSKHAPLTLSCQIRPKQLSQIAELRVTSLDASQASEKDISLVQTPHKVEVNEKIEESIEYVQNLLMTSGDGRISVSPYDTAVIALIKDLKGRDAPQFPSCLEWIAHHQLADGSWGDEFFCIYDRILNTLACVVALKSWNLHSDIIEKGVTYIKENVHKLKGANVEHRTAGFELVVPTFMQMATDLGIQDLPYDHPLIKEIADTKQQRLKEIPKDLVYQMPTNLLYSLEGLGDLEWERLLKLQSGNGSFLTSPSSTAAVLMHTKDEKCLKYIENALKNCDGGAPHTYPVDIFSRLWAIDRLQRLGISRFFQHEIKYFLDHIESVWEETGVFSGRYTKFSDIDDTSMGVRLLKMHGYDVDPNVLKHFKQQDGKFSCYIGQSVESASPMYNLYRAAQLRFPGEEVLEEATKFAFNFLQEMLVKDRLQERWVISDHLFDEIKLGLKMPWYATLPRVEAAYYLDHYAGSGDVWIGKSFYRMPEISNDTYKELAILDFNRCQTQHQLEWIHMQEWYDRCSLSEFGISKRELLRSYFLAAATIFEPERTQERLLWAKTRILSKMITSFVNISGTTLSLDYNFNGLDEIISSANEDQGLAGTLLATFHQLLDGFDIYTLHQLKHVWSQWFMKVQQGEGSGGEDAVLLANTLNICAGLNEDVLSNNEYTALSTLTNKICNRLAQIQDNKILQVVDGSIKDKELEQDMQALVKLVLQENGGAVDRNIRHTFLSVSKTFYYDAYHDDETTDLHIFKVLFRPVV.

Substrate is bound at residue arginine 240. Mg(2+)-binding residues include aspartate 372 and aspartate 374. Residues 372–375 (DIDD) carry the DXDD motif motif. Arginine 459 is a substrate binding site.

Belongs to the terpene synthase family. Requires Mg(2+) as cofactor.

It is found in the plastid. Its subcellular location is the chloroplast. The enzyme catalyses (2E,6E,10E)-geranylgeranyl diphosphate + H2O = 8-hydroxycopalyl diphosphate. The protein operates within secondary metabolite biosynthesis; terpenoid biosynthesis. In terms of biological role, involved in the biosynthesis of labdane-type diterpenoid including sclareol, a diterpene-diol that is used as fragrance and flavoring, and has anticancer effects (able to kill leukemic and colon cancer cells by apoptosis). Sclareol can also be used as synthesis precursor of ambergris substitution fragance products such as ambrox. Terpene synthase that produces 8-hydroxycopalyl diphosphate from geranylgeranyl diphosphate (GGPP). The chain is Copal-8-ol diphosphate hydratase TPSSA3, chloroplastic from Salvia sclarea (Clary sage).